Consider the following 350-residue polypeptide: MTCRIAIRKYSFILCLAVGSVTIYTSEVIGTPLYFVNKELYNKYIAFTKSFAGILFTALVQLFSPTPVTLTYDPELRNLFYLDRNGCLETIAAERNIVIANHQLYSDWMYVWWLSYTAKQHGHVYIMLKNSLKWLPVIGWGMQLFRFIFLSRKWDKDYETMSRHFKFIRNVRDSVSLILFPEGTNLVESTYQRSRVYADKIGVKMPKHLMLPRVRGLFYSISQLRDSMTYLYDYTFYFSDPSPKKYAADAFSLPKLFFEGVPIKRLHIHVRRFPISEIPTEEDQFTDWLYQRWYEKDKLIDTLLETGNFPGPKKLHTTVRLKHRLEILSLFSVLFTCIVAGLFLKLFISH.

3 helical membrane passes run 10-30 (YSFILCLAVGSVTIYTSEVIG), 51-71 (FAGILFTALVQLFSPTPVTLT), and 327-347 (ILSLFSVLFTCIVAGLFLKLF).

This sequence belongs to the 1-acyl-sn-glycerol-3-phosphate acyltransferase family.

The protein resides in the endoplasmic reticulum membrane. This is an uncharacterized protein from Schizosaccharomyces pombe (strain 972 / ATCC 24843) (Fission yeast).